Consider the following 473-residue polypeptide: Trigger factor (473 aa).

Positions 174–261 (GDIAVVSFKG…LKDLKEKELP (88 aa)) constitute a PPIase FKBP-type domain. Residues 442-473 (ATKLTTKTTTKATTKKGVKTKSKPKVNKKEKN) are disordered. Residues 444-453 (KLTTKTTTKA) are compositionally biased toward low complexity. The segment covering 454 to 467 (TTKKGVKTKSKPKV) has biased composition (basic residues).

This sequence belongs to the FKBP-type PPIase family. Tig subfamily.

The protein resides in the cytoplasm. The enzyme catalyses [protein]-peptidylproline (omega=180) = [protein]-peptidylproline (omega=0). Functionally, involved in protein export. Acts as a chaperone by maintaining the newly synthesized protein in an open conformation. Functions as a peptidyl-prolyl cis-trans isomerase. This is Trigger factor from Prochlorococcus marinus subsp. pastoris (strain CCMP1986 / NIES-2087 / MED4).